A 117-amino-acid polypeptide reads, in one-letter code: MRASSFLIVVVFLIAGTLVLEAAVTGVPVKGQDTVKGRVPFNGQDPVKGQVSVKGQDKVKAQEPVKGPVSTKPGSCPIILIRCAMLNPPNRCLKDTDCPGIKKCCEGSCGMACFVPQ.

The N-terminal stretch at 1-22 is a signal peptide; sequence MRASSFLIVVVFLIAGTLVLEA. The propeptide occupies 23–60; that stretch reads AVTGVPVKGQDTVKGRVPFNGQDPVKGQVSVKGQDKVK. SVP-1 clotting repeat units lie at residues 29 to 54 and 55 to 72; these read VKGQ…VSVK and GQDK…VSTK. The interval 29–72 is 2 X tandem repeats of SVP-1 like motif; the sequence is VKGQDTVKGRVPFNGQDPVKGQVSVKGQDKVKAQEPVKGPVSTK. Positions 69-117 constitute a WAP domain; sequence VSTKPGSCPIILIRCAMLNPPNRCLKDTDCPGIKKCCEGSCGMACFVPQ. Intrachain disulfides connect Cys76–Cys105, Cys83–Cys109, Cys92–Cys104, and Cys98–Cys113.

The protein localises to the secreted. In terms of biological role, neutrophil and pancreatic elastase-specific inhibitor of skin. It may prevent elastase-mediated tissue proteolysis. Has been shown to inhibit the alpha-4-beta-2/CHRNA2-CHRNB2 nicotinic acetylcholine receptor and to produce a weak inhibition on Kv11.1/KCNH2/ERG1 and on the transient receptor potential cation channel subfamily V member 1 (TRPV1). This is Elafin (PI3) from Homo sapiens (Human).